The following is a 426-amino-acid chain: Mitogen-activated protein kinase 8 (426 aa).

One can recognise a Protein kinase domain in the interval 26 to 321 (YQNLKPIGSG…VDDALQHPYI (296 aa)). ATP-binding positions include 33–38 (GSGAQG) and Lys55. Asp151 (proton acceptor) is an active-site residue. Residue Thr183 is modified to Phosphothreonine. Positions 183–185 (TPY) match the TXY motif. Tyr185 bears the Phosphotyrosine mark. The segment at 375–426 (QPAPLGAAVTDGSQAHTSSSSGDASSMSTDPTLPSDTDSSLETSAGTLGCCR) is disordered. The segment covering 384–404 (TDGSQAHTSSSSGDASSMSTD) has biased composition (low complexity). A compositionally biased stretch (polar residues) spans 405–420 (PTLPSDTDSSLETSAG).

Belongs to the protein kinase superfamily. CMGC Ser/Thr protein kinase family. MAP kinase subfamily. Requires Mg(2+) as cofactor. Post-translationally, dually phosphorylated on Thr-183 and Tyr-185, which activates the enzyme. In terms of tissue distribution, strongly expressed in presumptive ectoderm and mesoderm regions and weakly expressed in endoderm regions during early stages of embryo development. Expressed in the head and dorsal regions during neurula and tailbud stages.

It localises to the cytoplasm. It is found in the nucleus. The protein localises to the synapse. The catalysed reaction is L-seryl-[protein] + ATP = O-phospho-L-seryl-[protein] + ADP + H(+). It catalyses the reaction L-threonyl-[protein] + ATP = O-phospho-L-threonyl-[protein] + ADP + H(+). With respect to regulation, activated by threonine and tyrosine phosphorylation, potentially by the dual-specificity kinase, MKK7. Indirectly activated by Wnt5a. In terms of biological role, responds to activation by environmental stress and pro-inflammatory cytokines by phosphorylating a number of transcription factors, and thus regulating transcriptional activity. Regulates morphogenic cell movements, controlling convergent extension during gastrulation. May play a role in the regulation of the circadian clock. This Xenopus laevis (African clawed frog) protein is Mitogen-activated protein kinase 8 (mapk8).